A 505-amino-acid chain; its full sequence is Autophagy-related protein 18 (505 aa).

2 WD repeats span residues 246-286 (AHKG…KLYQ) and 291-330 (TYPT…EERT). The short motif at 287 to 291 (FRRGT) is the L/FRRG motif element. The disordered stretch occupies residues 328–380 (ERTSGGADDADSDDSGNENDGDNNSVGNGDVSSLLSDNDIESTREPYVDASRK). Acidic residues predominate over residues 335–348 (DDADSDDSGNENDG). Low complexity predominate over residues 349–360 (DNNSVGNGDVSS). The span at 368–379 (ESTREPYVDASR) shows a compositional bias: basic and acidic residues.

Belongs to the WD repeat PROPPIN family. As to quaternary structure, component of the PI(3,5)P2 regulatory complex.

Its subcellular location is the preautophagosomal structure membrane. It is found in the vacuole membrane. It localises to the endosome membrane. In terms of biological role, the PI(3,5)P2 regulatory complex regulates both the synthesis and turnover of phosphatidylinositol 3,5-bisphosphate (PtdIns(3,5)P2). Necessary for proper vacuole morphology. Plays an important role in osmotically-induced vacuole fragmentation. Required for cytoplasm to vacuole transport (Cvt) vesicle formation, pexophagy and starvation-induced autophagy. Involved in correct ATG9 trafficking to the pre-autophagosomal structure. Might also be involved in premeiotic DNA replication. The chain is Autophagy-related protein 18 (ATG18) from Candida glabrata (strain ATCC 2001 / BCRC 20586 / JCM 3761 / NBRC 0622 / NRRL Y-65 / CBS 138) (Yeast).